A 340-amino-acid chain; its full sequence is Ketol-acid reductoisomerase (NADP(+)) (340 aa).

The 182-residue stretch at 1 to 182 (MRVYYDRDCD…GGGRSGIIET (182 aa)) folds into the KARI N-terminal Rossmann domain. NADP(+)-binding positions include 24 to 27 (YGSQ), arginine 48, serine 51, serine 53, and 83 to 86 (DELQ). Histidine 108 is a catalytic residue. Glycine 134 is an NADP(+) binding site. In terms of domain architecture, KARI C-terminal knotted spans 183 to 329 (NFRQECETDL…EKLRGMMPWI (147 aa)). The Mg(2+) site is built by aspartate 191, glutamate 195, glutamate 227, and glutamate 231. Serine 252 serves as a coordination point for substrate.

The protein belongs to the ketol-acid reductoisomerase family. Requires Mg(2+) as cofactor.

The enzyme catalyses (2R)-2,3-dihydroxy-3-methylbutanoate + NADP(+) = (2S)-2-acetolactate + NADPH + H(+). The catalysed reaction is (2R,3R)-2,3-dihydroxy-3-methylpentanoate + NADP(+) = (S)-2-ethyl-2-hydroxy-3-oxobutanoate + NADPH + H(+). Its pathway is amino-acid biosynthesis; L-isoleucine biosynthesis; L-isoleucine from 2-oxobutanoate: step 2/4. It participates in amino-acid biosynthesis; L-valine biosynthesis; L-valine from pyruvate: step 2/4. Involved in the biosynthesis of branched-chain amino acids (BCAA). Catalyzes an alkyl-migration followed by a ketol-acid reduction of (S)-2-acetolactate (S2AL) to yield (R)-2,3-dihydroxy-isovalerate. In the isomerase reaction, S2AL is rearranged via a Mg-dependent methyl migration to produce 3-hydroxy-3-methyl-2-ketobutyrate (HMKB). In the reductase reaction, this 2-ketoacid undergoes a metal-dependent reduction by NADPH to yield (R)-2,3-dihydroxy-isovalerate. This Paracoccus denitrificans (strain Pd 1222) protein is Ketol-acid reductoisomerase (NADP(+)).